The following is a 135-amino-acid chain: Allatotropins (135 aa).

The signal sequence occupies residues 1-22 (MNFSMHLVLAVAAAACLCVVTA). Position 51 is a phenylalanine amide (F51). Residues 55–135 (DRPHTRAELY…SSEELLRNVA (81 aa)) constitute a propeptide that is removed on maturation.

Allatotropin: Expressed in corpora cardiaca (CC), corpora allata (CA), antennal lobe (AL) and gnathal ganglion (GNG) (protein level). Expression in AL detected in all animals, expression in GNG detected in most animals and expression in CA and CC detected in few animals (at protein level). Allatotropin-PP-1: Expressed in corpora cardiaca (CC), corpora allata (CA), antennal lobe (AL) and gnathal ganglion (GNG) (at protein level). Expression in AL detected in all animals and expression in GNG, CA and CC detected in some animals (at protein level).

It localises to the secreted. In terms of biological role, neuropeptide stimulator of juvenile hormone synthesis. The sequence is that of Allatotropins from Agrotis ipsilon (Black cutworm moth).